We begin with the raw amino-acid sequence, 42 residues long: Phospholipase A1 (42 aa).

Belongs to the AB hydrolase superfamily. Lipase family. In terms of processing, contains six disulfide bonds. As to expression, expressed by the venom gland.

It is found in the secreted. The catalysed reaction is a 1,2-diacyl-sn-glycero-3-phosphocholine + H2O = a 2-acyl-sn-glycero-3-phosphocholine + a fatty acid + H(+). Its function is as follows. Catalyzes the hydrolysis of phosphatidylcholine with phospholipase A1 activity. May act as an allergen and induce hemolytic activity. The chain is Phospholipase A1 from Polistes gallicus (Paper wasp).